A 61-amino-acid chain; its full sequence is UPF0370 protein SG1720 (61 aa).

The chain crosses the membrane as a helical span at residues 3–23 (WLADYWWVVLLVLAGMLIGGV). The segment covering 37–47 (NRPELPPHRDN) has biased composition (basic and acidic residues). Residues 37–61 (NRPELPPHRDNNAQWDEEDDWPKKP) form a disordered region. Over residues 51–61 (WDEEDDWPKKP) the composition is skewed to acidic residues.

The protein belongs to the UPF0370 family.

Its subcellular location is the cell membrane. This chain is UPF0370 protein SG1720, found in Sodalis glossinidius (strain morsitans).